The primary structure comprises 308 residues: Exosporium protein A (308 aa).

It localises to the spore wall. This is Exosporium protein A from Clostridium sporogenes (strain ATCC 15579).